The following is an 86-amino-acid chain: Small ribosomal subunit protein bS18 (86 aa).

The protein belongs to the bacterial ribosomal protein bS18 family. Part of the 30S ribosomal subunit. Forms a tight heterodimer with protein bS6.

Binds as a heterodimer with protein bS6 to the central domain of the 16S rRNA, where it helps stabilize the platform of the 30S subunit. The chain is Small ribosomal subunit protein bS18 from Campylobacter curvus (strain 525.92).